A 407-amino-acid chain; its full sequence is Probable tRNA sulfurtransferase (407 aa).

The THUMP domain occupies 61–165; sequence NEITYRLSKI…LDAIYMYEEV (105 aa). Residues 183–184, 208–209, Arg-265, Gly-287, and Gln-296 contribute to the ATP site; these read ML and HF.

It belongs to the ThiI family.

Its subcellular location is the cytoplasm. The enzyme catalyses [ThiI sulfur-carrier protein]-S-sulfanyl-L-cysteine + a uridine in tRNA + 2 reduced [2Fe-2S]-[ferredoxin] + ATP + H(+) = [ThiI sulfur-carrier protein]-L-cysteine + a 4-thiouridine in tRNA + 2 oxidized [2Fe-2S]-[ferredoxin] + AMP + diphosphate. It carries out the reaction [ThiS sulfur-carrier protein]-C-terminal Gly-Gly-AMP + S-sulfanyl-L-cysteinyl-[cysteine desulfurase] + AH2 = [ThiS sulfur-carrier protein]-C-terminal-Gly-aminoethanethioate + L-cysteinyl-[cysteine desulfurase] + A + AMP + 2 H(+). The protein operates within cofactor biosynthesis; thiamine diphosphate biosynthesis. Functionally, catalyzes the ATP-dependent transfer of a sulfur to tRNA to produce 4-thiouridine in position 8 of tRNAs, which functions as a near-UV photosensor. Also catalyzes the transfer of sulfur to the sulfur carrier protein ThiS, forming ThiS-thiocarboxylate. This is a step in the synthesis of thiazole, in the thiamine biosynthesis pathway. The sulfur is donated as persulfide by IscS. The chain is Probable tRNA sulfurtransferase from Staphylococcus aureus (strain Mu3 / ATCC 700698).